Reading from the N-terminus, the 150-residue chain is Large ribosomal subunit protein uL15 (150 aa).

The tract at residues 1 to 49 is disordered; that stretch reads MELHQLKSVSKSRNHKSKVVGRGHGSGLGKTSSRGQKGQKARKSGLTRL. The span at 10 to 21 shows a compositional bias: basic residues; it reads SKSRNHKSKVVG.

This sequence belongs to the universal ribosomal protein uL15 family. Part of the 50S ribosomal subunit.

Functionally, binds to the 23S rRNA. This is Large ribosomal subunit protein uL15 from Mycoplasma genitalium (strain ATCC 33530 / DSM 19775 / NCTC 10195 / G37) (Mycoplasmoides genitalium).